Reading from the N-terminus, the 260-residue chain is tRNA pseudouridine synthase A (260 aa).

The active-site Nucleophile is Asp-60. Tyr-118 provides a ligand contact to substrate.

This sequence belongs to the tRNA pseudouridine synthase TruA family. Homodimer.

It carries out the reaction uridine(38/39/40) in tRNA = pseudouridine(38/39/40) in tRNA. In terms of biological role, formation of pseudouridine at positions 38, 39 and 40 in the anticodon stem and loop of transfer RNAs. In Leuconostoc citreum (strain KM20), this protein is tRNA pseudouridine synthase A.